Consider the following 777-residue polypeptide: B3 domain-containing protein REM-like 1 (777 aa).

Residues 97-193 (FVTFTLAPVD…TPVLSLCFEE (97 aa)) constitute a DNA-binding region (TF-B3 1). 2 disordered regions span residues 200-248 (VGEE…TSPS) and 344-391 (KSSS…ESSS). Positions 218–243 (KIVKDDNNKDESSTWKREGNHLRCKD) are enriched in basic and acidic residues. The TF-B3 2 DNA-binding region spans 252 to 347 (TLTVTITPDS…TPVLSIKSSS (96 aa)). The span at 344-368 (KSSSGKGQSEFSKESLSIKPSSGNM) shows a compositional bias: polar residues. The span at 370–388 (KKVENNREASRKYPPRSRE) shows a compositional bias: basic and acidic residues. DNA-binding regions (TF-B3) lie at residues 582–676 (FLTL…RDSS) and 683–777 (FLTL…FYTK).

The protein localises to the nucleus. The chain is B3 domain-containing protein REM-like 1 from Arabidopsis thaliana (Mouse-ear cress).